Consider the following 78-residue polypeptide: uncharacterized protein (78 aa).

The disordered stretch occupies residues 49-78 (QRASLERSNSIRNLQSQGKRRSDSKESRKL). The segment covering 54 to 65 (ERSNSIRNLQSQ) has biased composition (polar residues). The span at 68 to 78 (RRSDSKESRKL) shows a compositional bias: basic and acidic residues.

This is an uncharacterized protein from Saccharomyces cerevisiae (strain ATCC 204508 / S288c) (Baker's yeast).